Here is a 149-residue protein sequence, read N- to C-terminus: Calmodulin (149 aa).

An N-acetylalanine modification is found at Ala2. EF-hand domains follow at residues 8–43, 44–79, 81–116, and 117–149; these read EQIAEFKEAFSLFDKDGDGSITTKELGTVMRSLGQN, PTEAELQDMINEVDADGNGTIDFPEFLNLMARKMKD, DSEEELKEAFKVFDKDQNGYISAADWRHVMTNLGEK, and LTDEEVDEMIREADVDGDGQVNYEEFVKMMMAK. 15 residues coordinate Ca(2+): Asp21, Asp23, Asp25, Ser27, Glu32, Asp57, Asp59, Asn61, Thr63, Glu68, Asp94, Asp96, Asn98, Tyr100, and Asp105. Lys116 bears the N6,N6,N6-trimethyllysine mark. Ca(2+)-binding residues include Asp130, Asp132, Asp134, Gln136, and Glu141.

Belongs to the calmodulin family.

Calmodulin mediates the control of a large number of enzymes, ion channels and other proteins by Ca(2+). Among the enzymes to be stimulated by the calmodulin-Ca(2+) complex are a number of protein kinases and phosphatases. The protein is Calmodulin of Mougeotia scalaris (Green alga).